Reading from the N-terminus, the 185-residue chain is Ribosome-recycling factor (185 aa).

Residues 137–158 (NQVKKLEKDKEISEDESKKAQE) are disordered. Over residues 140–158 (KKLEKDKEISEDESKKAQE) the composition is skewed to basic and acidic residues.

This sequence belongs to the RRF family.

It localises to the cytoplasm. Functionally, responsible for the release of ribosomes from messenger RNA at the termination of protein biosynthesis. May increase the efficiency of translation by recycling ribosomes from one round of translation to another. The chain is Ribosome-recycling factor from Helicobacter pylori (strain P12).